Reading from the N-terminus, the 770-residue chain is uncharacterized protein (770 aa).

Residues 736-770 (GSGQPGQSPANVGDDPNRMVQSSASQTQIGHVFNN) are disordered. The span at 754-770 (MVQSSASQTQIGHVFNN) shows a compositional bias: polar residues.

This is an uncharacterized protein from Caenorhabditis elegans.